The following is a 551-amino-acid chain: Arginine--tRNA ligase (551 aa).

The 'HIGH' region motif lies at 124–134; that stretch reads ANPTGPLHIGH.

It belongs to the class-I aminoacyl-tRNA synthetase family. As to quaternary structure, monomer.

The protein resides in the cytoplasm. It carries out the reaction tRNA(Arg) + L-arginine + ATP = L-arginyl-tRNA(Arg) + AMP + diphosphate. The polypeptide is Arginine--tRNA ligase (Solidesulfovibrio magneticus (strain ATCC 700980 / DSM 13731 / RS-1) (Desulfovibrio magneticus)).